We begin with the raw amino-acid sequence, 416 residues long: Tryptophan synthase beta chain (416 aa).

K109 is modified (N6-(pyridoxal phosphate)lysine).

It belongs to the TrpB family. As to quaternary structure, tetramer of two alpha and two beta chains. The cofactor is pyridoxal 5'-phosphate.

It catalyses the reaction (1S,2R)-1-C-(indol-3-yl)glycerol 3-phosphate + L-serine = D-glyceraldehyde 3-phosphate + L-tryptophan + H2O. It participates in amino-acid biosynthesis; L-tryptophan biosynthesis; L-tryptophan from chorismate: step 5/5. Functionally, the beta subunit is responsible for the synthesis of L-tryptophan from indole and L-serine. The polypeptide is Tryptophan synthase beta chain (Mesorhizobium japonicum (strain LMG 29417 / CECT 9101 / MAFF 303099) (Mesorhizobium loti (strain MAFF 303099))).